The primary structure comprises 334 residues: Beta-hexosaminidase (334 aa).

Residues Asp-62, Arg-70, Arg-130, and 160 to 161 (KH) each bind substrate. His-173 acts as the Proton donor/acceptor in catalysis. The active-site Nucleophile is the Asp-243.

It belongs to the glycosyl hydrolase 3 family. NagZ subfamily.

It localises to the cytoplasm. It catalyses the reaction Hydrolysis of terminal non-reducing N-acetyl-D-hexosamine residues in N-acetyl-beta-D-hexosaminides.. It participates in cell wall biogenesis; peptidoglycan recycling. Functionally, plays a role in peptidoglycan recycling by cleaving the terminal beta-1,4-linked N-acetylglucosamine (GlcNAc) from peptide-linked peptidoglycan fragments, giving rise to free GlcNAc, anhydro-N-acetylmuramic acid and anhydro-N-acetylmuramic acid-linked peptides. The chain is Beta-hexosaminidase from Photobacterium profundum (strain SS9).